We begin with the raw amino-acid sequence, 436 residues long: Glutamate-1-semialdehyde 2,1-aminomutase (436 aa).

Lysine 270 is modified (N6-(pyridoxal phosphate)lysine).

The protein belongs to the class-III pyridoxal-phosphate-dependent aminotransferase family. HemL subfamily. In terms of assembly, homodimer. Requires pyridoxal 5'-phosphate as cofactor.

Its subcellular location is the cytoplasm. The catalysed reaction is (S)-4-amino-5-oxopentanoate = 5-aminolevulinate. The protein operates within porphyrin-containing compound metabolism; protoporphyrin-IX biosynthesis; 5-aminolevulinate from L-glutamyl-tRNA(Glu): step 2/2. This is Glutamate-1-semialdehyde 2,1-aminomutase from Cutibacterium acnes (strain DSM 16379 / KPA171202) (Propionibacterium acnes).